We begin with the raw amino-acid sequence, 1160 residues long: GPI inositol-deacylase (1160 aa).

Residues 1–92 form a disordered region; that stretch reads MHRRSSGSPV…DPRSSSAAMP (92 aa). The segment covering 57–92 has biased composition (polar residues); the sequence is GASTPRSRNSSTWRMPSSATTTLLPPDPRSSSAAMP. An N-linked (GlcNAc...) asparagine glycan is attached at asparagine 65. The helical transmembrane segment at 120-140 threads the bilayer; it reads PCSILTALTSLLASLFLCAIL. The active site involves serine 307. 2 consecutive transmembrane segments (helical) span residues 786 to 806 and 832 to 852; these read LVMR…ALVL and SSLP…ATSS. Residue asparagine 866 is glycosylated (N-linked (GlcNAc...) asparagine). The next 2 membrane-spanning stretches (helical) occupy residues 886–906 and 973–993; these read AFFW…CVIL and ILLL…VACI. An N-linked (GlcNAc...) asparagine glycan is attached at asparagine 1019. A run of 4 helical transmembrane segments spans residues 1023-1043, 1060-1080, 1092-1112, and 1115-1135; these read SIFI…LVWA, VLSI…TMIP, LILF…AYLL, and LANI…GFSV.

Belongs to the GPI inositol-deacylase family.

The protein resides in the endoplasmic reticulum membrane. Its function is as follows. Involved in inositol deacylation of GPI-anchored proteins which plays important roles in the quality control and ER-associated degradation of GPI-anchored proteins. In Aspergillus terreus (strain NIH 2624 / FGSC A1156), this protein is GPI inositol-deacylase (bst1).